The sequence spans 251 residues: Hydroxyacylglutathione hydrolase (251 aa).

Residues His54, His56, Asp58, His59, His113, Asp140, and His178 each contribute to the Zn(2+) site.

This sequence belongs to the metallo-beta-lactamase superfamily. Glyoxalase II family. In terms of assembly, monomer. The cofactor is Zn(2+).

It catalyses the reaction an S-(2-hydroxyacyl)glutathione + H2O = a 2-hydroxy carboxylate + glutathione + H(+). Its pathway is secondary metabolite metabolism; methylglyoxal degradation; (R)-lactate from methylglyoxal: step 2/2. Functionally, thiolesterase that catalyzes the hydrolysis of S-D-lactoyl-glutathione to form glutathione and D-lactic acid. This chain is Hydroxyacylglutathione hydrolase, found in Synechococcus sp. (strain CC9902).